A 352-amino-acid polypeptide reads, in one-letter code: UDP-N-acetylglucosamine--N-acetylmuramyl-(pentapeptide) pyrophosphoryl-undecaprenol N-acetylglucosamine transferase (352 aa).

Residues 13 to 15, Asn125, Arg161, Ser189, Ile242, 261 to 266, and Gln286 contribute to the UDP-N-acetyl-alpha-D-glucosamine site; these read TGG and ALTVSE.

The protein belongs to the glycosyltransferase 28 family. MurG subfamily.

It localises to the cell inner membrane. The enzyme catalyses di-trans,octa-cis-undecaprenyl diphospho-N-acetyl-alpha-D-muramoyl-L-alanyl-D-glutamyl-meso-2,6-diaminopimeloyl-D-alanyl-D-alanine + UDP-N-acetyl-alpha-D-glucosamine = di-trans,octa-cis-undecaprenyl diphospho-[N-acetyl-alpha-D-glucosaminyl-(1-&gt;4)]-N-acetyl-alpha-D-muramoyl-L-alanyl-D-glutamyl-meso-2,6-diaminopimeloyl-D-alanyl-D-alanine + UDP + H(+). It functions in the pathway cell wall biogenesis; peptidoglycan biosynthesis. Its function is as follows. Cell wall formation. Catalyzes the transfer of a GlcNAc subunit on undecaprenyl-pyrophosphoryl-MurNAc-pentapeptide (lipid intermediate I) to form undecaprenyl-pyrophosphoryl-MurNAc-(pentapeptide)GlcNAc (lipid intermediate II). The protein is UDP-N-acetylglucosamine--N-acetylmuramyl-(pentapeptide) pyrophosphoryl-undecaprenol N-acetylglucosamine transferase of Erwinia tasmaniensis (strain DSM 17950 / CFBP 7177 / CIP 109463 / NCPPB 4357 / Et1/99).